A 382-amino-acid chain; its full sequence is Galactokinase (382 aa).

34–37 (EHTD) serves as a coordination point for substrate. 124–130 (GAGLSSS) serves as a coordination point for ATP. The Mg(2+) site is built by Ser-130 and Glu-162. Residue Asp-174 is the Proton acceptor of the active site. A substrate-binding site is contributed by Tyr-223.

The protein belongs to the GHMP kinase family. GalK subfamily.

It localises to the cytoplasm. It catalyses the reaction alpha-D-galactose + ATP = alpha-D-galactose 1-phosphate + ADP + H(+). The protein operates within carbohydrate metabolism; galactose metabolism. In terms of biological role, catalyzes the transfer of the gamma-phosphate of ATP to D-galactose to form alpha-D-galactose-1-phosphate (Gal-1-P). The polypeptide is Galactokinase (Escherichia coli (strain SMS-3-5 / SECEC)).